A 335-amino-acid polypeptide reads, in one-letter code: Ketol-acid reductoisomerase (NADP(+)) 2 (335 aa).

In terms of domain architecture, KARI N-terminal Rossmann spans 1 to 180 (MKTYYEKDAN…GCTRAGVIET (180 aa)). NADP(+) is bound by residues 24 to 27 (YGSQ), arginine 47, serine 51, and 81 to 84 (DEQQ). The active site involves histidine 106. Position 132 (glycine 132) interacts with NADP(+). Residues 181 to 326 (TFQEETETDL…AELREMMSWI (146 aa)) enclose the KARI C-terminal knotted domain. Mg(2+) contacts are provided by aspartate 189, glutamate 193, glutamate 225, and glutamate 229. Serine 250 is a substrate binding site.

The protein belongs to the ketol-acid reductoisomerase family. It depends on Mg(2+) as a cofactor.

The catalysed reaction is (2R)-2,3-dihydroxy-3-methylbutanoate + NADP(+) = (2S)-2-acetolactate + NADPH + H(+). It carries out the reaction (2R,3R)-2,3-dihydroxy-3-methylpentanoate + NADP(+) = (S)-2-ethyl-2-hydroxy-3-oxobutanoate + NADPH + H(+). It participates in amino-acid biosynthesis; L-isoleucine biosynthesis; L-isoleucine from 2-oxobutanoate: step 2/4. It functions in the pathway amino-acid biosynthesis; L-valine biosynthesis; L-valine from pyruvate: step 2/4. Involved in the biosynthesis of branched-chain amino acids (BCAA). Catalyzes an alkyl-migration followed by a ketol-acid reduction of (S)-2-acetolactate (S2AL) to yield (R)-2,3-dihydroxy-isovalerate. In the isomerase reaction, S2AL is rearranged via a Mg-dependent methyl migration to produce 3-hydroxy-3-methyl-2-ketobutyrate (HMKB). In the reductase reaction, this 2-ketoacid undergoes a metal-dependent reduction by NADPH to yield (R)-2,3-dihydroxy-isovalerate. The protein is Ketol-acid reductoisomerase (NADP(+)) 2 of Bacillus cereus (strain ZK / E33L).